The following is a 210-amino-acid chain: Cancer/testis antigen 2 (210 aa).

Gly residues-rich tracts occupy residues 1–47 and 56–66; these read MQAE…GPRG and PRGGAPRGPHG. Disordered regions lie at residues 1–80 and 154–197; these read MQAE…PCGA and GLGS…DGCR. The segment covering 163-177 has biased composition (basic and acidic residues); it reads QKARDLRTPKHKVSE.

It belongs to the CTAG/PCC1 family. Testis and very low level in placenta and in some uterus samples. Observed in 25-50% of tumor samples of melanomas, non-small-cell lung carcinomas, bladder, prostate and head and neck cancers.

The chain is Cancer/testis antigen 2 (CTAG2) from Homo sapiens (Human).